The sequence spans 531 residues: Laccase-4 (531 aa).

A signal peptide spans 1 to 19 (MLSSITLLPLLAAVSTPAF). Plastocyanin-like domains follow at residues 23 to 146 (RNYK…LVIY), 158 to 315 (VDDA…LHYE), and 384 to 507 (SLPT…VSSR). Asn-66 is a glycosylation site (N-linked (GlcNAc...) asparagine). 2 residues coordinate Cu cation: His-83 and His-85. A disulfide bridge connects residues Cys-104 and Cys-528. Residue Asn-109 is glycosylated (N-linked (GlcNAc...) asparagine). Cu cation is bound by residues His-128 and His-130. N-linked (GlcNAc...) asparagine glycans are attached at residues Asn-186, Asn-231, Asn-280, and Asn-395. Residues His-427, His-430, His-432, His-479, Cys-480, and His-481 each contribute to the Cu cation site.

It belongs to the multicopper oxidase family. In terms of assembly, homodimer. Requires Cu cation as cofactor. In mycelia, at a higher level than LCC1, LCC2 and LCC3.

It is found in the secreted. It carries out the reaction 4 hydroquinone + O2 = 4 benzosemiquinone + 2 H2O. Lignin degradation and detoxification of lignin-derived products. This chain is Laccase-4 (LCC4), found in Thanatephorus cucumeris (Black scurf of potato).